The primary structure comprises 481 residues: Glutamate--tRNA ligase (481 aa).

The short motif at 9–19 is the 'HIGH' region element; it reads PSPTGNLHIGT. The 'KMSKS' region signature appears at 249 to 253; sequence KLSKR. Residue K252 participates in ATP binding.

The protein belongs to the class-I aminoacyl-tRNA synthetase family. Glutamate--tRNA ligase type 1 subfamily. Monomer.

Its subcellular location is the cytoplasm. The enzyme catalyses tRNA(Glu) + L-glutamate + ATP = L-glutamyl-tRNA(Glu) + AMP + diphosphate. Functionally, catalyzes the attachment of glutamate to tRNA(Glu) in a two-step reaction: glutamate is first activated by ATP to form Glu-AMP and then transferred to the acceptor end of tRNA(Glu). The protein is Glutamate--tRNA ligase of Picosynechococcus sp. (strain ATCC 27264 / PCC 7002 / PR-6) (Agmenellum quadruplicatum).